The chain runs to 353 residues: UDP-N-acetylglucosamine--N-acetylmuramyl-(pentapeptide) pyrophosphoryl-undecaprenol N-acetylglucosamine transferase (353 aa).

Residues Thr-14–Gly-16, Asn-126, Arg-162, Ser-190, Ile-243, Ala-262–Glu-267, and Gln-287 each bind UDP-N-acetyl-alpha-D-glucosamine.

This sequence belongs to the glycosyltransferase 28 family. MurG subfamily.

It is found in the cell inner membrane. The enzyme catalyses di-trans,octa-cis-undecaprenyl diphospho-N-acetyl-alpha-D-muramoyl-L-alanyl-D-glutamyl-meso-2,6-diaminopimeloyl-D-alanyl-D-alanine + UDP-N-acetyl-alpha-D-glucosamine = di-trans,octa-cis-undecaprenyl diphospho-[N-acetyl-alpha-D-glucosaminyl-(1-&gt;4)]-N-acetyl-alpha-D-muramoyl-L-alanyl-D-glutamyl-meso-2,6-diaminopimeloyl-D-alanyl-D-alanine + UDP + H(+). The protein operates within cell wall biogenesis; peptidoglycan biosynthesis. Cell wall formation. Catalyzes the transfer of a GlcNAc subunit on undecaprenyl-pyrophosphoryl-MurNAc-pentapeptide (lipid intermediate I) to form undecaprenyl-pyrophosphoryl-MurNAc-(pentapeptide)GlcNAc (lipid intermediate II). The polypeptide is UDP-N-acetylglucosamine--N-acetylmuramyl-(pentapeptide) pyrophosphoryl-undecaprenol N-acetylglucosamine transferase (Vibrio atlanticus (strain LGP32) (Vibrio splendidus (strain Mel32))).